Here is a 376-residue protein sequence, read N- to C-terminus: Coatomer subunit delta-4 (376 aa).

The segment at 65–92 (LNTDTDTFTSRPKGRTSGGTTGAGKGIG) is disordered. A compositionally biased stretch (gly residues) spans 80–92 (TSGGTTGAGKGIG). The MHD domain occupies 134 to 376 (SDPVTVAVEE…RLVADNYQVV (243 aa)).

Belongs to the adaptor complexes medium subunit family. Delta-COP subfamily. Oligomeric complex that consists of at least the alpha, beta, beta', gamma, delta, epsilon and zeta subunits.

Its subcellular location is the cytoplasm. The protein resides in the golgi apparatus membrane. It is found in the cytoplasmic vesicle. The protein localises to the COPI-coated vesicle membrane. Functionally, the coatomer is a cytosolic protein complex that binds to dilysine motifs and reversibly associates with Golgi non-clathrin-coated vesicles, which further mediate biosynthetic protein transport from the ER, via the Golgi up to the trans Golgi network. Coatomer complex is required for budding from Golgi membranes, and is essential for the retrograde Golgi-to-ER transport of dilysine-tagged proteins. In Oryza sativa subsp. japonica (Rice), this protein is Coatomer subunit delta-4.